The following is a 352-amino-acid chain: Phosphate acyltransferase (352 aa).

The segment covering 328–339 (ESFPGDAREREG) has biased composition (basic and acidic residues). Positions 328 to 352 (ESFPGDAREREGAQAPDAGTERVAS) are disordered.

The protein belongs to the PlsX family. In terms of assembly, homodimer. Probably interacts with PlsY.

Its subcellular location is the cytoplasm. It carries out the reaction a fatty acyl-[ACP] + phosphate = an acyl phosphate + holo-[ACP]. It participates in lipid metabolism; phospholipid metabolism. Catalyzes the reversible formation of acyl-phosphate (acyl-PO(4)) from acyl-[acyl-carrier-protein] (acyl-ACP). This enzyme utilizes acyl-ACP as fatty acyl donor, but not acyl-CoA. The protein is Phosphate acyltransferase of Geobacter sp. (strain M21).